A 232-amino-acid chain; its full sequence is Myb-related protein 308 (232 aa).

HTH myb-type domains follow at residues Lys-9–Leu-61 and Arg-62–Leu-116. 2 consecutive DNA-binding regions (H-T-H motif) follow at residues Trp-37–Leu-61 and Trp-89–Ile-112.

Expressed in roots, stems, leaves, seed pods and flowers.

It localises to the nucleus. Its function is as follows. Transcription factor. This chain is Myb-related protein 308, found in Antirrhinum majus (Garden snapdragon).